The primary structure comprises 256 residues: Thiazole synthase (256 aa).

Lysine 91 (schiff-base intermediate with DXP) is an active-site residue. 1-deoxy-D-xylulose 5-phosphate-binding positions include glycine 152, 179-180 (AG), and 201-202 (NT).

The protein belongs to the ThiG family. Homotetramer. Forms heterodimers with either ThiH or ThiS.

It is found in the cytoplasm. It catalyses the reaction [ThiS sulfur-carrier protein]-C-terminal-Gly-aminoethanethioate + 2-iminoacetate + 1-deoxy-D-xylulose 5-phosphate = [ThiS sulfur-carrier protein]-C-terminal Gly-Gly + 2-[(2R,5Z)-2-carboxy-4-methylthiazol-5(2H)-ylidene]ethyl phosphate + 2 H2O + H(+). It functions in the pathway cofactor biosynthesis; thiamine diphosphate biosynthesis. Its function is as follows. Catalyzes the rearrangement of 1-deoxy-D-xylulose 5-phosphate (DXP) to produce the thiazole phosphate moiety of thiamine. Sulfur is provided by the thiocarboxylate moiety of the carrier protein ThiS. In vitro, sulfur can be provided by H(2)S. In Erwinia tasmaniensis (strain DSM 17950 / CFBP 7177 / CIP 109463 / NCPPB 4357 / Et1/99), this protein is Thiazole synthase.